The primary structure comprises 286 residues: D-tagatose-1,6-bisphosphate aldolase subunit KbaY (286 aa).

Residue aspartate 82 is the Proton donor of the active site. 2 residues coordinate Zn(2+): histidine 83 and histidine 180. Glycine 181 lines the dihydroxyacetone phosphate pocket. Residue histidine 208 participates in Zn(2+) binding. Dihydroxyacetone phosphate-binding positions include 209–211 (GAS) and 230–233 (NVAT).

It belongs to the class II fructose-bisphosphate aldolase family. TagBP aldolase KbaY subfamily. As to quaternary structure, homotetramer. Forms a complex with KbaZ. Zn(2+) is required as a cofactor.

It catalyses the reaction D-tagatofuranose 1,6-bisphosphate = D-glyceraldehyde 3-phosphate + dihydroxyacetone phosphate. It functions in the pathway carbohydrate metabolism; D-tagatose 6-phosphate degradation; D-glyceraldehyde 3-phosphate and glycerone phosphate from D-tagatose 6-phosphate: step 2/2. Catalytic subunit of the tagatose-1,6-bisphosphate aldolase KbaYZ, which catalyzes the reversible aldol condensation of dihydroxyacetone phosphate (DHAP or glycerone-phosphate) with glyceraldehyde 3-phosphate (G3P) to produce tagatose 1,6-bisphosphate (TBP). Requires KbaZ subunit for full activity and stability. This Escherichia coli O127:H6 (strain E2348/69 / EPEC) protein is D-tagatose-1,6-bisphosphate aldolase subunit KbaY.